The sequence spans 515 residues: MDEFHRYGKEDSSWQQCFLYPLFFQEDLYAISHDHYLDGSSSSEPMEHLSSNDQFSFLTVKRLIGQIRQQNHSIVLFVNCDPNPLVDRKKSSYSESVLEGLTLVLEVPFSIRSKYSVEGMNEWKSFRSIHSIFPFLEDKFPHSNYVSDTRIPYSIHPEILVRTFRRWIGDAPSLHPLRSILYEYRNSSESLQRSIIVVPKVNTRFFLFLWNNYVYECESILVSLLKRSSHSRSLSHGSFPQRTHFHRKIKNIFLFSRRNSFQSIWSLKDPNIHYVRYGERSIIAIKGTNLLVKKYRYYLPIFRQCYFHLWNEPYRVCSHQLSKNCSSSLGYFLRFRMKPLLVKTKMLDELFIADLITDEFDPIVPIVPIIGLLSREKFCDISGRPISKLSWTSLTDDDILDRFDRIWRNLFHYYSGSFGRDGLYRIKYILSLSCAKTLACKHKSTIRVVRKELGPELFKKSFSKERELDSPPFSSKAAARSQRERIWHSDIPQINPLAHSWQKIQDLKIENLFDQ.

The protein belongs to the intron maturase 2 family. MatK subfamily.

The protein localises to the plastid. It localises to the chloroplast. Its function is as follows. Usually encoded in the trnK tRNA gene intron. Probably assists in splicing its own and other chloroplast group II introns. In Picea engelmannii (Engelmann's spruce), this protein is Maturase K.